The sequence spans 287 residues: ATP synthase subunit a (287 aa).

Transmembrane regions (helical) follow at residues 37 to 57 (LDSV…MWLA), 96 to 116 (FIAP…AMDL), 149 to 169 (LGLS…IKGL), 187 to 207 (PVFA…EYVA), 224 to 244 (ELVF…LSGV), and 266 to 286 (TLQA…AHEA).

It belongs to the ATPase A chain family. F-type ATPases have 2 components, CF(1) - the catalytic core - and CF(0) - the membrane proton channel. CF(1) has five subunits: alpha(3), beta(3), gamma(1), delta(1), epsilon(1). CF(0) has three main subunits: a(1), b(2) and c(9-12). The alpha and beta chains form an alternating ring which encloses part of the gamma chain. CF(1) is attached to CF(0) by a central stalk formed by the gamma and epsilon chains, while a peripheral stalk is formed by the delta and b chains.

The protein localises to the cell inner membrane. Its function is as follows. Key component of the proton channel; it plays a direct role in the translocation of protons across the membrane. This chain is ATP synthase subunit a, found in Acidovorax sp. (strain JS42).